A 205-amino-acid polypeptide reads, in one-letter code: Transcription termination/antitermination protein NusG (205 aa).

The KOW domain occupies 154–178; sequence GDHIMVLSGPFKDFEGDVIEVSPER.

This sequence belongs to the NusG family.

Participates in transcription elongation, termination and antitermination. The polypeptide is Transcription termination/antitermination protein NusG (Synechocystis sp. (strain ATCC 27184 / PCC 6803 / Kazusa)).